The sequence spans 1182 residues: Tyrosine-protein kinase ABL2 (1182 aa).

Disordered stretches follow at residues 1 to 47 (MGQQ…TGFN) and 60 to 80 (EDGF…HRPY). Glycine 2 carries the N-myristoyl glycine lipid modification. Positions 2–106 (GQQVGRVGEA…SKENLLGATE (105 aa)) are CAP. The span at 20–30 (RGIRGSSAARP) shows a compositional bias: low complexity. Phosphoserine is present on serine 97. The region spanning 107–167 (SDPNLFVALY…PSNYITPVNS (61 aa)) is the SH3 domain. 6 positions are modified to phosphotyrosine: tyrosine 116, tyrosine 161, tyrosine 174, tyrosine 185, tyrosine 218, and tyrosine 231. The region spanning 173 to 263 (WYHGPVSRSA…GLVTTLHYPA (91 aa)) is the SH2 domain. A Phosphotyrosine; by ABL1 and autocatalysis modification is found at tyrosine 261. Tyrosine 272 is subject to Phosphotyrosine; by autocatalysis. Serine 275 bears the Phosphoserine mark. Residues 288-539 (ITMKHKLGGG…PSFAETHQAF (252 aa)) form the Protein kinase domain. An ATP-binding site is contributed by 294 to 302 (LGGGQYGEV). Phosphotyrosine occurs at positions 299 and 303. ATP-binding positions include lysine 317 and 362 to 368 (EYMPYGN). The active-site Proton acceptor is aspartate 409. The Kinase activation loop signature appears at 427-451 (DFGLSRLMTGDTYTAHAGAKFPIKW). Tyrosine 439 is modified (phosphotyrosine; by autocatalysis and SRC-type Tyr-kinases). Tyrosine 459 bears the Phosphotyrosine mark. Tyrosine 568 carries the phosphotyrosine; by autocatalysis modification. The tract at residues 611–641 (IRGAQASSGSPALPRKQRDKSPSSLLEDAKE) is disordered. 3 positions are modified to phosphoserine: serine 620, serine 631, and serine 633. A Phosphotyrosine modification is found at aspartate 647. Residues 654 to 674 (SSFMKKRNAPTPPKRSSSFRE) are disordered. The residue at position 655 (serine 655) is a Phosphoserine. The Nuclear localization signal signature appears at 658-660 (KKR). Phosphotyrosine occurs at positions 662 and 668. Phosphoserine is present on residues serine 669, serine 670, and serine 671. Phosphotyrosine occurs at positions 683 and 718. Tyrosine 683 is subject to Phosphotyrosine; by autocatalysis. An F-actin-binding region spans residues 694-930 (SLQHADGFSF…PVLPTTHNHK (237 aa)). The tract at residues 763–794 (LRAGKPTASDDTSKPFPRSNSTSSMSSGLPEQ) is disordered. Lysine 776 bears the N6-acetyllysine mark. Residues 780-791 (RSNSTSSMSSGL) show a composition bias toward polar residues. At serine 783 the chain carries Phosphoserine. Position 800 is a phosphothreonine (threonine 800). The span at 807–823 (RSKLQLERTVSTSSQPE) shows a compositional bias: polar residues. The interval 807 to 851 (RSKLQLERTVSTSSQPEENVDRANDMLPKKSEESAAPSRERPKAK) is disordered. Residues serine 817 and serine 820 each carry the phosphoserine modification. Residues 825–849 (NVDRANDMLPKKSEESAAPSRERPK) are compositionally biased toward basic and acidic residues. Phosphoserine occurs at positions 915 and 936. Residues 964–1024 (HQVTSSGDKD…TSETQEGGKK (61 aa)) form a disordered region. Residues 1010–1019 (TAGQSTSETQ) show a composition bias toward polar residues. The segment at 1020–1182 (EGGKKAALGA…VQEISDVVQR (163 aa)) is F-actin-binding.

This sequence belongs to the protein kinase superfamily. Tyr protein kinase family. ABL subfamily. Interacts with PSMA7. Interacts with CTTN. Found in a complex with ABL1, ABL2, CRK and UNC119; leading to the inhibition of CRK phosphorylation by ABL kinases. Mg(2+) is required as a cofactor. Mn(2+) serves as cofactor. In terms of processing, phosphorylated at Tyr-261 by ABL1 in response to oxidative stress. Phosphorylated by PDGFRB. Post-translationally, polyubiquitinated. Polyubiquitination of ABL2 leads to degradation. As to expression, widely expressed.

The protein localises to the cytoplasm. It is found in the cytoskeleton. The enzyme catalyses L-tyrosyl-[protein] + ATP = O-phospho-L-tyrosyl-[protein] + ADP + H(+). With respect to regulation, stabilized in the inactive form by an association between the SH3 domain and the SH2-TK linker region, interactions of the N-terminal cap, and contributions from an N-terminal myristoyl group and phospholipids. Activated by autophosphorylation as well as by SRC-family kinase-mediated phosphorylation. Activated by RIN1 binding to the SH2 and SH3 domains. Inhibited by imatinib mesylate (Gleevec) which is used for the treatment of chronic myeloid leukemia (CML). Phosphatidylinositol 4,5-bisphosphate (PIP2), a highly abundant phosphoinositide known to regulate cytoskeletal and membrane proteins, inhibits the tyrosine kinase activity. Its function is as follows. Non-receptor tyrosine-protein kinase that plays an ABL1-overlapping role in key processes linked to cell growth and survival such as cytoskeleton remodeling in response to extracellular stimuli, cell motility and adhesion and receptor endocytosis. Coordinates actin remodeling through tyrosine phosphorylation of proteins controlling cytoskeleton dynamics like MYH10 (involved in movement); CTTN (involved in signaling); or TUBA1 and TUBB (microtubule subunits). Binds directly F-actin and regulates actin cytoskeletal structure through its F-actin-bundling activity. Involved in the regulation of cell adhesion and motility through phosphorylation of key regulators of these processes such as CRK, CRKL, DOK1 or ARHGAP35. Adhesion-dependent phosphorylation of ARHGAP35 promotes its association with RASA1, resulting in recruitment of ARHGAP35 to the cell periphery where it inhibits RHO. Phosphorylates multiple receptor tyrosine kinases like PDGFRB and other substrates which are involved in endocytosis regulation such as RIN1. In brain, may regulate neurotransmission by phosphorylating proteins at the synapse. ABL2 also acts as a regulator of multiple pathological signaling cascades during infection. Pathogens can highjack ABL2 kinase signaling to reorganize the host actin cytoskeleton for multiple purposes, like facilitating intracellular movement and host cell exit. Finally, functions as its own regulator through autocatalytic activity as well as through phosphorylation of its inhibitor, ABI1. Positively regulates chemokine-mediated T-cell migration, polarization, and homing to lymph nodes and immune-challenged tissues, potentially via activation of NEDD9/HEF1 and RAP1. The sequence is that of Tyrosine-protein kinase ABL2 (ABL2) from Homo sapiens (Human).